The following is a 202-amino-acid chain: HTH-type transcriptional regulator BetI (202 aa).

The 61-residue stretch at 8 to 68 (PIRRRQLIDA…ATMRDITRQL (61 aa)) folds into the HTH tetR-type domain. A DNA-binding region (H-T-H motif) is located at residues 31–50 (TIAQIARRAGVSAGIISHYF).

It participates in amine and polyamine biosynthesis; betaine biosynthesis via choline pathway [regulation]. Repressor involved in the biosynthesis of the osmoprotectant glycine betaine. It represses transcription of the choline transporter BetT and the genes of BetAB involved in the synthesis of glycine betaine. The protein is HTH-type transcriptional regulator BetI of Cronobacter sakazakii (strain ATCC BAA-894) (Enterobacter sakazakii).